Reading from the N-terminus, the 452-residue chain is Lichenan permease IIC component (452 aa).

The 414-residue stretch at 8 to 421 folds into the PTS EIIC type-3 domain; that stretch reads LEEKVMPIAG…AVSFVVYYPF (414 aa). A run of 10 helical transmembrane segments spans residues 31–51, 72–92, 104–124, 138–158, 187–207, 218–238, 246–266, 291–311, 351–373, and 402–422; these read GIIL…IGNL, LAYP…FGIA, LSAG…QVPF, GIPL…IAMV, FVAL…RLIV, IVSV…GGSL, LLWA…APIW, FFDI…VVTM, LLLP…MSTG, and SGAV…YPFF.

It localises to the cell membrane. The phosphoenolpyruvate-dependent sugar phosphotransferase system (PTS), a major carbohydrate active -transport system, catalyzes the phosphorylation of incoming sugar substrates concomitant with their translocation across the cell membrane. This system is involved in lichenan transport. The chain is Lichenan permease IIC component (licC) from Bacillus subtilis (strain 168).